Consider the following 561-residue polypeptide: Putative periplasmic trehalase (561 aa).

Positions 1 to 30 (MKSPAPSRPQKMALIPACIFLCFAALSVQA) are cleaved as a signal peptide. Substrate contacts are provided by residues Arg148, 155 to 156 (WD), Asn192, 201 to 203 (RSQ), 273 to 275 (RPE), and Gly306. Catalysis depends on proton donor/acceptor residues Asp308 and Glu492. A substrate-binding site is contributed by Glu507. The segment at 535 to 561 (CDNVPATRPLSESTTQPVKQKEAEPTP) is disordered.

The protein belongs to the glycosyl hydrolase 37 family. Monomer.

It is found in the periplasm. It carries out the reaction alpha,alpha-trehalose + H2O = alpha-D-glucose + beta-D-glucose. Its function is as follows. Provides the cells with the ability to utilize trehalose at high osmolarity by splitting it into glucose molecules that can subsequently be taken up by the phosphotransferase-mediated uptake system. This is Putative periplasmic trehalase from Escherichia coli O157:H7.